A 256-amino-acid chain; its full sequence is Extracellular serine-rich protein ARB_03024 (256 aa).

The first 19 residues, 1-19 (MVATKSVLSAVALAGVAAA), serve as a signal peptide directing secretion. Residues 135 to 235 (KIVPQSGSPT…TPTASPGAAA (101 aa)) are disordered. Gly residues predominate over residues 149–159 (GTLGGSGGSGG). Composition is skewed to low complexity over residues 160-204 (SSSS…QSTP) and 215-235 (PSATGSGSHSSTPTASPGAAA). A lipid anchor (GPI-anchor amidated alanine) is attached at Ala-233. Positions 234–256 (AAGLKGSAVLAGVVALGAWIGLL) are cleaved as a propeptide — removed in mature form.

The protein localises to the cell membrane. It is found in the secreted. The sequence is that of Extracellular serine-rich protein ARB_03024 from Arthroderma benhamiae (strain ATCC MYA-4681 / CBS 112371) (Trichophyton mentagrophytes).